We begin with the raw amino-acid sequence, 225 residues long: MKHVLKNDWGPLLAPEFEKEYYRELDVFLKEEYSIHVVYPKIEDIFNALEYTSYENTKVVILGQDPYHGPNQAHGLSFSVQPGVKTPPSLLNMYKELRDEYGYDIPNNGYLVKWAEQGVLLLNTVLTVRQGEANSHKGKGWEHFTDRVIELLNEREKPVIFILWGRHAQAKKKLITNSNHHIIESVHPSPLSARRGFFGSKPYSKVNTILANMGEREIDWEIPNL.

The active-site Proton acceptor is the Asp65.

It belongs to the uracil-DNA glycosylase (UDG) superfamily. UNG family.

It is found in the cytoplasm. It catalyses the reaction Hydrolyzes single-stranded DNA or mismatched double-stranded DNA and polynucleotides, releasing free uracil.. In terms of biological role, excises uracil residues from the DNA which can arise as a result of misincorporation of dUMP residues by DNA polymerase or due to deamination of cytosine. The polypeptide is Uracil-DNA glycosylase (Bacillus thuringiensis (strain Al Hakam)).